Here is a 207-residue protein sequence, read N- to C-terminus: Large ribosomal subunit protein uL4 (207 aa).

The tract at residues Lys50–Gln75 is disordered.

It belongs to the universal ribosomal protein uL4 family. As to quaternary structure, part of the 50S ribosomal subunit.

In terms of biological role, one of the primary rRNA binding proteins, this protein initially binds near the 5'-end of the 23S rRNA. It is important during the early stages of 50S assembly. It makes multiple contacts with different domains of the 23S rRNA in the assembled 50S subunit and ribosome. Its function is as follows. Forms part of the polypeptide exit tunnel. The polypeptide is Large ribosomal subunit protein uL4 (Pelobacter propionicus (strain DSM 2379 / NBRC 103807 / OttBd1)).